Consider the following 196-residue polypeptide: MLDRIKVCFTESIQTQIAAAEALPDAISRAAIMMVQSLLNGNKILCCGNGGSAATAQRFAANMINRFETERPSLPALSLNADNVVITAISSNKQHDEIYAKQVRALGQPGDVLLAISTHGNSRDIVKAVEAAVTRDMTIVALTGYDGGELAGLLGPQDVEIRIPSHRSTRIQEVHMLTVNCLCDLIDNTLFPHQDD.

An SIS domain is found at M34 to D196.

It belongs to the SIS family. DiaA subfamily. As to quaternary structure, homotetramer; dimer of dimers.

Functionally, required for the timely initiation of chromosomal replication via direct interactions with the DnaA initiator protein. The polypeptide is DnaA initiator-associating protein DiaA (Photorhabdus laumondii subsp. laumondii (strain DSM 15139 / CIP 105565 / TT01) (Photorhabdus luminescens subsp. laumondii)).